The primary structure comprises 127 residues: Mitochondrial pyruvate carrier 2 (127 aa).

Residues 2-40 (AAAGARGLRATYHRLMDKVELLLPKKLRPLYNHPAGPRT) lie on the Mitochondrial matrix side of the membrane. Position 26 is an N6-acetyllysine (K26). The helical transmembrane segment at 41-61 (VFFWAPIMKWGLVCAGLADMA) threads the bilayer. The Mitochondrial intermembrane portion of the chain corresponds to 62-72 (RPAEKLSTAQS). A helical membrane pass occupies residues 73-90 (TVLMATGFIWSRYSLVII). Topologically, residues 91 to 95 (PKNWS) are mitochondrial matrix. The chain crosses the membrane as a helical span at residues 96-115 (LFAVNFFVGSAGASQLFRIW). The Mitochondrial intermembrane portion of the chain corresponds to 116-127 (KYNQELKSKGIQ).

This sequence belongs to the mitochondrial pyruvate carrier (MPC) (TC 2.A.105) family. In terms of assembly, homodimer. Homooligomer. Forms heterodimers with MPC1 and MPC1L. The heterodimer is the more stable and dominant form. As to expression, liver, kidney, and brain.

It is found in the mitochondrion inner membrane. The enzyme catalyses pyruvate(out) + H(+)(out) = pyruvate(in) + H(+)(in). Functionally, mediates the uptake of pyruvate into mitochondria. The sequence is that of Mitochondrial pyruvate carrier 2 (Mpc2) from Rattus norvegicus (Rat).